The primary structure comprises 143 residues: MYDLTALRQQTDEIIDNLLKDGSDPEALHIIEHHIAHHDFDKLEKLVVDAYKLGYEISEAEEIEDDQGNVLFVCDIVSEVKLNGDIITAQQQELLPLIEKAAAEYEGWGTYFEDPNAEEDEYGDDGEFFDDEDEADFNNAKVH.

The tract at residues 113–143 (EDPNAEEDEYGDDGEFFDDEDEADFNNAKVH) is disordered. Residues 115 to 136 (PNAEEDEYGDDGEFFDDEDEAD) are compositionally biased toward acidic residues.

The protein belongs to the RraB family. As to quaternary structure, interacts with the C-terminal region of Rne.

The protein resides in the cytoplasm. Functionally, globally modulates RNA abundance by binding to RNase E (Rne) and regulating its endonucleolytic activity. Can modulate Rne action in a substrate-dependent manner by altering the composition of the degradosome. This Haemophilus ducreyi (strain 35000HP / ATCC 700724) protein is Regulator of ribonuclease activity B.